Consider the following 349-residue polypeptide: MKPVALVTTKPGFEPQLREELNKLPIKKKILWTPFRGILKVLSQNPYEFLNIIKENKNNLKFSLRIIPLEIGCQTDINEIKKAISFLINKKKEKLKNKSFVVRCNRRGNHEFTSEELERIIGEYVLENFKDLNLRVNLKDWDFKINIEILQDESYISIFQDEFNELVIEENIKNLKNLKRYIERPLNRSERKMQELMEKFPFIFENINCVVDIGSSPGGWAKMLSKKAKKVYAIDTGELKIKANNIIHIKKRAENVDFEKDINEEIDLITNDTNLYPDESLFLTLKFAKHLKTNGYIIHTLKARNLKTKKEDLEKVLKILSYYRNIKIFKIINLRANTKNELTLILKKV.

A THUMP domain is found at 51–160 (NIIKENKNNL…QDESYISIFQ (110 aa)).

This is an uncharacterized protein from Methanocaldococcus jannaschii (strain ATCC 43067 / DSM 2661 / JAL-1 / JCM 10045 / NBRC 100440) (Methanococcus jannaschii).